The primary structure comprises 647 residues: Neutral endopeptidase (647 aa).

Positions 1–647 (MRRYLAVRGG…LDPEDRITIW (647 aa)) constitute a Peptidase M13 domain. H496 lines the Zn(2+) pocket. The active site involves E497. Zn(2+) is bound by residues H500 and E556. D560 acts as the Proton donor in catalysis.

This sequence belongs to the peptidase M13 family. It depends on Zn(2+) as a cofactor.

This chain is Neutral endopeptidase (pepO), found in Lactobacillus helveticus (Lactobacillus suntoryeus).